The sequence spans 108 residues: Large ribosomal subunit protein bL21 (108 aa).

Belongs to the bacterial ribosomal protein bL21 family. As to quaternary structure, part of the 50S ribosomal subunit. Contacts protein L20.

Its function is as follows. This protein binds to 23S rRNA in the presence of protein L20. In Buchnera aphidicola subsp. Acyrthosiphon pisum (strain 5A), this protein is Large ribosomal subunit protein bL21.